Consider the following 454-residue polypeptide: Bifunctional protein GlmU (454 aa).

The interval 1-232 is pyrophosphorylase; that stretch reads MTDRTCLSIV…VDNVIGINNR (232 aa). Residues 11 to 14, K25, Q78, and 83 to 84 each bind UDP-N-acetyl-alpha-D-glucosamine; these read LAAG and GT. D108 is a binding site for Mg(2+). UDP-N-acetyl-alpha-D-glucosamine-binding residues include G144, E158, N173, and N230. Mg(2+) is bound at residue N230. A linker region spans residues 233-253; that stretch reads AELAEAETIWQNRKRRELMLS. The N-acetyltransferase stretch occupies residues 254 to 454; the sequence is GVTLIAPETV…AIKAAKSVSK (201 aa). The UDP-N-acetyl-alpha-D-glucosamine site is built by R319 and K337. Residue H349 is the Proton acceptor of the active site. 2 residues coordinate UDP-N-acetyl-alpha-D-glucosamine: Y352 and N363. Acetyl-CoA-binding positions include A366, 372–373, S391, S409, and R426; that span reads NY.

In the N-terminal section; belongs to the N-acetylglucosamine-1-phosphate uridyltransferase family. This sequence in the C-terminal section; belongs to the transferase hexapeptide repeat family. Homotrimer. Mg(2+) is required as a cofactor.

Its subcellular location is the cytoplasm. It carries out the reaction alpha-D-glucosamine 1-phosphate + acetyl-CoA = N-acetyl-alpha-D-glucosamine 1-phosphate + CoA + H(+). The catalysed reaction is N-acetyl-alpha-D-glucosamine 1-phosphate + UTP + H(+) = UDP-N-acetyl-alpha-D-glucosamine + diphosphate. It functions in the pathway nucleotide-sugar biosynthesis; UDP-N-acetyl-alpha-D-glucosamine biosynthesis; N-acetyl-alpha-D-glucosamine 1-phosphate from alpha-D-glucosamine 6-phosphate (route II): step 2/2. Its pathway is nucleotide-sugar biosynthesis; UDP-N-acetyl-alpha-D-glucosamine biosynthesis; UDP-N-acetyl-alpha-D-glucosamine from N-acetyl-alpha-D-glucosamine 1-phosphate: step 1/1. The protein operates within bacterial outer membrane biogenesis; LPS lipid A biosynthesis. Functionally, catalyzes the last two sequential reactions in the de novo biosynthetic pathway for UDP-N-acetylglucosamine (UDP-GlcNAc). The C-terminal domain catalyzes the transfer of acetyl group from acetyl coenzyme A to glucosamine-1-phosphate (GlcN-1-P) to produce N-acetylglucosamine-1-phosphate (GlcNAc-1-P), which is converted into UDP-GlcNAc by the transfer of uridine 5-monophosphate (from uridine 5-triphosphate), a reaction catalyzed by the N-terminal domain. The polypeptide is Bifunctional protein GlmU (Brucella abortus (strain S19)).